The primary structure comprises 320 residues: Olfactory receptor 2T12 (320 aa).

The Extracellular segment spans residues Met1–Gln23. N-linked (GlcNAc...) asparagine glycosylation occurs at Asn17. Residues Val24 to Ile47 form a helical membrane-spanning segment. Over His48–Arg55 the chain is Cytoplasmic. A helical transmembrane segment spans residues Pro56–Pro77. Over Lys78–Gln98 the chain is Extracellular. Cysteines 95 and 187 form a disulfide. A helical transmembrane segment spans residues Ile99 to Tyr118. Residues Asp119–Gln137 are Cytoplasmic-facing. A helical transmembrane segment spans residues Leu138 to Leu156. Over Gln157–Phe193 the chain is Extracellular. Residues Glu194 to Gly217 form a helical membrane-spanning segment. Residues Leu218 to Lys234 are Cytoplasmic-facing. A helical transmembrane segment spans residues Ala235–Tyr257. Over Met258–Lys270 the chain is Extracellular. Residues Val271–Val290 traverse the membrane as a helical segment. Residues Arg291 to Arg320 lie on the Cytoplasmic side of the membrane.

The protein belongs to the G-protein coupled receptor 1 family.

Its subcellular location is the cell membrane. In terms of biological role, odorant receptor. The protein is Olfactory receptor 2T12 (OR2T12) of Homo sapiens (Human).